We begin with the raw amino-acid sequence, 1013 residues long: Poly [ADP-ribose] polymerase 1 (1013 aa).

Ala2 is subject to N-acetylalanine. Residues 9–93 form a PARP-type 1 zinc finger; sequence YRVEYAKSGR…KVKKTAEAGG (85 aa). Cys21 and Cys24 together coordinate Zn(2+). The residue at position 41 (Ser41) is a Phosphoserine. The Zn(2+) site is built by His53 and Cys56. Lys97 and Lys105 each carry N6-acetyllysine. The segment at 113 to 203 adopts a PARP-type 2 zinc-finger fold; it reads FAAEYAKSNR…VLKKQLPGVK (91 aa). Zn(2+) contacts are provided by Cys125 and Cys128. The residue at position 131 (Lys131) is an N6-acetyllysine. Positions 159 and 162 each coordinate Zn(2+). Phosphoserine is present on residues Ser177, Ser179, and Ser185. Lys192 is covalently cross-linked (Glycyl lysine isopeptide (Lys-Gly) (interchain with G-Cter in SUMO2)). Residues 198 to 233 are disordered; that stretch reads QLPGVKSEGKRKGDEVDGADEVAKKKSKKGKDKDSK. Lys203 is covalently cross-linked (Glycyl lysine isopeptide (Lys-Gly) (interchain with G-Cter in SUMO1); alternate). A Glycyl lysine isopeptide (Lys-Gly) (interchain with G-Cter in SUMO2); alternate cross-link involves residue Lys203. 2 consecutive short sequence motifs (nuclear localization signal) follow at residues 207–209 and 221–226; these read KRK and KKKSKK. Positions 225 to 359 constitute a PADR1 zinc-binding domain; the sequence is KKGKDKDSKL…VKKQDRIFPP (135 aa). Residue Lys249 forms a Glycyl lysine isopeptide (Lys-Gly) (interchain with G-Cter in SUMO2) linkage. A phosphoserine mark is found at Ser274 and Ser277. A zinc ribbon region spans residues 290–332; the sequence is GALLPCKECSGQLVFKSDAYYCTGDVTAWTKCMVKTQTPSRKE. Cys295, Cys298, Cys311, and Cys321 together coordinate Zn(2+). Residues 357–383 are disordered; the sequence is FPPETSAPAPPHLPPSVTSAPTAVNSS. Positions 372–383 are enriched in polar residues; sequence SVTSAPTAVNSS. The interval 373-523 is automodification domain; sequence VTSAPTAVNS…GVNKSEKRMK (151 aa). The BRCT domain occupies 385–476; sequence PADKPLSNMK…KSLQELLSAH (92 aa). Asp387 carries the polyADP-ribosyl aspartic acid modification. PolyADP-ribosyl glutamic acid is present on residues Glu407, Glu413, Glu435, Glu437, Glu444, Glu445, and Glu456. A Glycyl lysine isopeptide (Lys-Gly) (interchain with G-Cter in SUMO2) cross-link involves residue Lys467. Residues Glu471 and Glu484 each carry the polyADP-ribosyl glutamic acid modification. Lys486 is covalently cross-linked (Glycyl lysine isopeptide (Lys-Gly) (interchain with G-Cter in SUMO1); alternate). Lys486 is covalently cross-linked (Glycyl lysine isopeptide (Lys-Gly) (interchain with G-Cter in SUMO2); alternate). Glu488 and Glu491 each carry polyADP-ribosyl glutamic acid. The disordered stretch occupies residues 495–516; it reads PKGKSAAPSKKSKGLYKEEGVN. Residues Ser499, Ser503, and Ser506 each carry the ADP-ribosylserine modification. Residue Lys511 forms a Glycyl lysine isopeptide (Lys-Gly) (interchain with G-Cter in SUMO2) linkage. PolyADP-ribosyl glutamic acid occurs at positions 512 and 513. An ADP-ribosylserine modification is found at Ser518. Glu519 carries the post-translational modification PolyADP-ribosyl glutamic acid. Lys520 carries the post-translational modification N6-(ADP-ribosyl)lysine. A Glycyl lysine isopeptide (Lys-Gly) (interchain with G-Cter in SUMO2) cross-link involves residue Lys527. The WGR domain maps to 541 to 637; sequence SAHVLEKGGK…KNFTKYPKKF (97 aa). At Thr593 the chain carries Phosphothreonine. An N6-acetyllysine mark is found at Lys599 and Lys620. Positions 661-778 constitute a PARP alpha-helical domain; the sequence is KSKLPKAVQE…DIEVAYSLLR (118 aa). Lys747 is covalently cross-linked (Glycyl lysine isopeptide (Lys-Gly) (interchain with G-Cter in SUMO1); alternate). A Glycyl lysine isopeptide (Lys-Gly) (interchain with G-Cter in SUMO2); alternate cross-link involves residue Lys747. A phosphoserine mark is found at Ser781 and Ser785. Positions 787–1013 constitute a PARP catalytic domain; sequence DPIDVNYEKL…LKFNFKTSLW (227 aa). NAD(+)-binding positions include 861 to 863, Gly870, Arg877, and Ser903; that span reads HGS. The active-site For poly [ADP-ribose] polymerase activity is the Glu987.

Belongs to the ARTD/PARP family. In terms of assembly, homodimer; PARP-type zinc-fingers from separate PARP1 molecules form a dimer module that specifically recognizes DNA strand breaks. Heterodimer; heterodimerizes with PARP2. Interacts (via the PARP catalytic domain) with HPF1. Interacts with NMNAT1. Interacts with nucleosomes; with a preference for nucleosomes containing H2A.X. Interacts with APTX. Component of a base excision repair (BER) complex, containing at least XRCC1, PARP1, PARP2, POLB and LRIG3. Interacts with SRY. The SWAP complex consists of NPM1, NCL, PARP1 and SWAP70. Interacts with TIAM2. Interacts with PARP3; leading to activate PARP1 in absence of DNA. Interacts (when poly-ADP-ribosylated) with CHD1L (via macro domain). Interacts with the DNA polymerase alpha catalytic subunit POLA1; this interaction functions as part of the control of replication fork progression. Interacts with EEF1A1 and TXK. Interacts with RNF4. Interacts with RNF146. Interacts with ZNF423. Interacts with APLF. Interacts with SNAI1 (via zinc fingers); the interaction requires SNAI1 to be poly-ADP-ribosylated and non-phosphorylated (active) by GSK3B. Interacts (when poly-ADP-ribosylated) with PARP9. Interacts with NR4A3; activates PARP1 by improving acetylation of PARP1 and suppressing the interaction between PARP1 and SIRT1. Interacts (via catalytic domain) with PUM3; the interaction inhibits the poly-ADP-ribosylation activity of PARP1 and the degradation of PARP1 by CASP3 following genotoxic stress. Interacts with ZNF365. Interacts with RRP1B. Interacts with TIMELESS; the interaction is direct. Interacts with CGAS; leading to impede the formation of the PARP1-TIMELESS complex. Interacts with KHDC3L, the interaction is increased following the formation of DNA double-strand breaks. Interacts (when auto-poly-ADP-ribosylated) with XRCC1; leading to inhibit PARP1 ADP-ribosyltransferase activity. Interacts with SPINDOC; promoting PARP1 ADP-ribosyltransferase activity. Interacts with BANF1; leading to inhibit PARP1 ADP-ribosyltransferase activity in response to oxidative DNA damage. Interacts (when sumoylated and ubiquitinated) with VCP/p97; leading to its extraction from chromatin. Interacts with YARS1; promoting PARP1 ADP-ribosyltransferase activity. Interacts with PACMP micropeptide; Interacts with PACMP micropeptide; interaction. Interacts (when poly-ADP-ribosylated) with isoform 1 of MACROH2A1; MACROH2A1 specifically binds to poly-ADP-ribose chains and inhibits PARP1 activity, limiting the consumption of nuclear NAD(+). Interacts with CARM1; promoting recruitment to replication forks. Interacts with RECQL. Interacts with ZNF32; the interaction reshapes ZNF432 interacting proteins. Interacts with TPRN; TPRN interacts with a number of DNA damage response proteins, is recruited to sites of DNA damage and may play a role in DNA damage repair. Interacts (when auto-poly-ADP-ribosylated) with AIFM1. In terms of processing, poly-ADP-ribosylated on serine, glutamate and aspartate residues by autocatalysis. Auto-ADP-ribosylation on serine takes place following interaction with HPF1. Auto poly-ADP-ribosylation on serine residues promotes its dissociation from chromatin. Poly-ADP-ribosylated by PARP2; poly-ADP-ribosylation mediates the recruitment of CHD1L to DNA damage sites. Mono-ADP-ribosylated at Lys-520 by SIRT6 in response to oxidative stress, promoting recruitment to double-strand breaks (DSBs) sites. Post-translationally, S-nitrosylated, leading to inhibit transcription regulation activity. Phosphorylated at Thr-593 by PRKDC in response to DNA damage following virus infection, promoting its translocation to the cytosol. Phosphorylated by TXK. In terms of processing, proteolytically cleaved by caspase-3 (CASP3) and caspase-7 (CASP7) in response to apoptosis to generate the Poly [ADP-ribose] polymerase 1, processed N-terminus and Poly [ADP-ribose] polymerase 1, processed C-terminus forms. Post-translationally, sumoylated with SUMO1 or SUMO2 by PIAS4 following prolonged residence (trapping) to chromatin. Sumoylation promotes ubiquitination by RNF4 and removal from chromatin by VCP/p97. Ubiquitinated by RNF4 following sumoylation by PIAS4 in response to prolonged residence (trapping) to chromatin. Ubiquitination promotes removal from chromatin by VCP/p97.

The protein resides in the chromosome. It is found in the nucleus. Its subcellular location is the nucleolus. The protein localises to the cytoplasm. It localises to the cytosol. It carries out the reaction NAD(+) + (ADP-D-ribosyl)n-acceptor = nicotinamide + (ADP-D-ribosyl)n+1-acceptor + H(+).. It catalyses the reaction L-seryl-[protein] + NAD(+) = O-(ADP-D-ribosyl)-L-seryl-[protein] + nicotinamide + H(+). The enzyme catalyses L-aspartyl-[protein] + NAD(+) = 4-O-(ADP-D-ribosyl)-L-aspartyl-[protein] + nicotinamide. The catalysed reaction is L-glutamyl-[protein] + NAD(+) = 5-O-(ADP-D-ribosyl)-L-glutamyl-[protein] + nicotinamide. It carries out the reaction L-tyrosyl-[protein] + NAD(+) = O-(ADP-D-ribosyl)-L-tyrosyl-[protein] + nicotinamide + H(+). It catalyses the reaction L-histidyl-[protein] + NAD(+) = N(tele)-(ADP-D-ribosyl)-L-histidyl-[protein] + nicotinamide + H(+). With respect to regulation, ADP-ribosyltransferase activity is regulated via an allosteric activation mechanism. In absence of activation signal, PARP1 is autoinhibited by the PARP alpha-helical domain (also named HD region), which prevents effective NAD(+)-binding. Activity is highly stimulated by signals, such as DNA strand breaks. Binding to damaged DNA unfolds the PARP alpha-helical domain, relieving autoinhibition. Poly-ADP-ribosyltransferase activity is tightly regulated and PARP1 is removed from damaged chromatin following initial poly-ADP-ribosylation of chromatin to avoid prolonged residence (trapping) that has cytotoxic consequences. A number of factors (VCP/p97) or post-translational modifications (auto-poly-ADP-ribosylation or ubiquitination) promote PARP1 removal from chromatin. Functionally, poly-ADP-ribosyltransferase that mediates poly-ADP-ribosylation of proteins and plays a key role in DNA repair. Mediates glutamate, aspartate, serine, histidine or tyrosine ADP-ribosylation of proteins: the ADP-D-ribosyl group of NAD(+) is transferred to the acceptor carboxyl group of target residues and further ADP-ribosyl groups are transferred to the 2'-position of the terminal adenosine moiety, building up a polymer with an average chain length of 20-30 units. Serine ADP-ribosylation of proteins constitutes the primary form of ADP-ribosylation of proteins in response to DNA damage. Specificity for the different amino acids is conferred by interacting factors, such as HPF1 and NMNAT1. Following interaction with HPF1, catalyzes serine ADP-ribosylation of target proteins; HPF1 confers serine specificity by completing the PARP1 active site. Also catalyzes tyrosine ADP-ribosylation of target proteins following interaction with HPF1. Following interaction with NMNAT1, catalyzes glutamate and aspartate ADP-ribosylation of target proteins; NMNAT1 confers glutamate and aspartate specificity. PARP1 initiates the repair of DNA breaks: recognizes and binds DNA breaks within chromatin and recruits HPF1, licensing serine ADP-ribosylation of target proteins, such as histones (H2BS6ADPr and H3S10ADPr), thereby promoting decompaction of chromatin and the recruitment of repair factors leading to the reparation of DNA strand breaks. HPF1 initiates serine ADP-ribosylation but restricts the polymerase activity of PARP1 in order to limit the length of poly-ADP-ribose chains. In addition to base excision repair (BER) pathway, also involved in double-strand breaks (DSBs) repair: together with TIMELESS, accumulates at DNA damage sites and promotes homologous recombination repair by mediating poly-ADP-ribosylation. Mediates the poly-ADP-ribosylation of a number of proteins, including itself, APLF, CHFR and NFAT5. In addition to proteins, also able to ADP-ribosylate DNA: catalyzes ADP-ribosylation of DNA strand break termini containing terminal phosphates and a 2'-OH group in single- and double-stranded DNA, respectively. Required for PARP9 and DTX3L recruitment to DNA damage sites. PARP1-dependent PARP9-DTX3L-mediated ubiquitination promotes the rapid and specific recruitment of 53BP1/TP53BP1, UIMC1/RAP80, and BRCA1 to DNA damage sites. PARP1-mediated DNA repair in neurons plays a role in sleep: senses DNA damage in neurons and promotes sleep, facilitating efficient DNA repair. In addition to DNA repair, also involved in other processes, such as transcription regulation, programmed cell death, membrane repair, adipogenesis and innate immunity. Acts as a repressor of transcription: binds to nucleosomes and modulates chromatin structure in a manner similar to histone H1, thereby altering RNA polymerase II. Acts both as a positive and negative regulator of transcription elongation, depending on the context. Acts as a positive regulator of transcription elongation by mediating poly-ADP-ribosylation of NELFE, preventing RNA-binding activity of NELFE and relieving transcription pausing. Acts as a negative regulator of transcription elongation in response to DNA damage by catalyzing poly-ADP-ribosylation of CCNT1, disrupting the phase separation activity of CCNT1 and subsequent activation of CDK9. Involved in replication fork progression following interaction with CARM1: mediates poly-ADP-ribosylation at replication forks, slowing fork progression. Poly-ADP-ribose chains generated by PARP1 also play a role in poly-ADP-ribose-dependent cell death, a process named parthanatos. Also acts as a negative regulator of the cGAS-STING pathway. Acts by mediating poly-ADP-ribosylation of CGAS: PARP1 translocates into the cytosol following phosphorylation by PRKDC and catalyzes poly-ADP-ribosylation and inactivation of CGAS. Acts as a negative regulator of adipogenesis: catalyzes poly-ADP-ribosylation of histone H2B on 'Glu-35' (H2BE35ADPr) following interaction with NMNAT1, inhibiting phosphorylation of H2B at 'Ser-36' (H2BS36ph), thereby blocking expression of pro-adipogenetic genes. Involved in the synthesis of ATP in the nucleus, together with NMNAT1, PARG and NUDT5. Nuclear ATP generation is required for extensive chromatin remodeling events that are energy-consuming. In terms of biological role, promotes AIFM1-mediated apoptosis. This form, which translocates into the cytoplasm following cleavage by caspase-3 (CASP3) and caspase-7 (CASP7) in response to apoptosis, is auto-poly-ADP-ribosylated and serves as a poly-ADP-ribose carrier to induce AIFM1-mediated apoptosis. Its function is as follows. This cleavage form irreversibly binds to DNA breaks and interferes with DNA repair, promoting DNA damage-induced apoptosis. In Cricetulus griseus (Chinese hamster), this protein is Poly [ADP-ribose] polymerase 1 (PARP1).